A 336-amino-acid chain; its full sequence is Protein REVEILLE 7-like (336 aa).

In terms of domain architecture, HTH myb-type spans 60-114; that stretch reads TVTKQREKWSEEEHDRFLEAIKLYGRGWRQIQEHIGTKTAVQIRSHAQKFFSKMA. Residues 87–110 constitute a DNA-binding region (H-T-H motif); it reads WRQIQEHIGTKTAVQIRSHAQKFF. The tract at residues 114-197 is disordered; the sequence is AQEADSRSEG…KQPFKDDSDI (84 aa). Over residues 134–144 the composition is skewed to basic residues; it reads RPKRKPAHPYP. Over residues 145–158 the composition is skewed to pro residues; it reads RKSPVPYTQSPPPN. A compositionally biased stretch (polar residues) spans 167-189; that stretch reads KSPTSVLSSFGSEDQNNYTTSKQ.

It localises to the nucleus. Functionally, probable transcription factor. This chain is Protein REVEILLE 7-like (RVE7L), found in Arabidopsis thaliana (Mouse-ear cress).